Reading from the N-terminus, the 202-residue chain is Proteasome subunit beta 1 (202 aa).

M1 is a propeptide (removed in mature form; by autocatalysis). Residue T2 is the Nucleophile of the active site.

This sequence belongs to the peptidase T1B family. As to quaternary structure, the 20S proteasome core is composed of 14 alpha and 14 beta subunits that assemble into four stacked heptameric rings, resulting in a barrel-shaped structure. The two inner rings, each composed of seven catalytic beta subunits, are sandwiched by two outer rings, each composed of seven alpha subunits. The catalytic chamber with the active sites is on the inside of the barrel. Has a gated structure, the ends of the cylinder being occluded by the N-termini of the alpha-subunits. Is capped at one or both ends by the proteasome regulatory ATPase, PAN.

The protein resides in the cytoplasm. The enzyme catalyses Cleavage of peptide bonds with very broad specificity.. With respect to regulation, the formation of the proteasomal ATPase PAN-20S proteasome complex, via the docking of the C-termini of PAN into the intersubunit pockets in the alpha-rings, triggers opening of the gate for substrate entry. Interconversion between the open-gate and close-gate conformations leads to a dynamic regulation of the 20S proteasome proteolysis activity. Functionally, component of the proteasome core, a large protease complex with broad specificity involved in protein degradation. The chain is Proteasome subunit beta 1 from Pyrobaculum arsenaticum (strain DSM 13514 / JCM 11321 / PZ6).